The sequence spans 596 residues: Elongation factor 4 (596 aa).

In terms of domain architecture, tr-type G spans 2–184 (KHIRNFSIIA…VIVAQIPPPE (183 aa)). Residues 14 to 19 (DHGKST) and 131 to 134 (NKID) contribute to the GTP site.

This sequence belongs to the TRAFAC class translation factor GTPase superfamily. Classic translation factor GTPase family. LepA subfamily.

The protein localises to the cell inner membrane. The enzyme catalyses GTP + H2O = GDP + phosphate + H(+). Required for accurate and efficient protein synthesis under certain stress conditions. May act as a fidelity factor of the translation reaction, by catalyzing a one-codon backward translocation of tRNAs on improperly translocated ribosomes. Back-translocation proceeds from a post-translocation (POST) complex to a pre-translocation (PRE) complex, thus giving elongation factor G a second chance to translocate the tRNAs correctly. Binds to ribosomes in a GTP-dependent manner. This chain is Elongation factor 4, found in Shewanella woodyi (strain ATCC 51908 / MS32).